The sequence spans 815 residues: Phosphate transporter PHO1-2 (815 aa).

Residues 1–421 (MVKFSREYEA…QQPRNTHMIT (421 aa)) lie on the Cytoplasmic side of the membrane. The region spanning 2–368 (VKFSREYEAS…EQQRATDLFS (367 aa)) is the SPX domain. Disordered regions lie at residues 83 to 108 (SAGQ…STDK), 166 to 213 (RGLA…LELQ), and 242 to 266 (AGKK…GGGG). Residues 97–108 (PDRGELVRSTDK) are compositionally biased toward basic and acidic residues. The span at 183–201 (PPSSVHGSSGRYLLSGLSS) shows a compositional bias: low complexity. Residues 202-213 (PQSMSDGSLELQ) are compositionally biased toward polar residues. A compositionally biased stretch (basic and acidic residues) spans 243–254 (GKKDGKTKDGSG). The segment covering 255 to 266 (KGRGGGGGGGGG) has biased composition (gly residues). The helical transmembrane segment at 422 to 442 (FLVGLFTGTFVSLFIIYAILA) threads the bilayer. At 443-458 (HVSGIFTSTGNSAYME) the chain is on the extracellular side. A helical membrane pass occupies residues 459–479 (IVYHVFSMFALISLHIFLYGC). At 480-508 (NLFMWKNTRINHNFIFDFSSNTALTHRDA) the chain is on the cytoplasmic side. Residues 509–529 (FLMSASIMCTVVAALVINLFL) traverse the membrane as a helical segment. The Extracellular segment spans residues 530-538 (KNAGVAYAN). The helical transmembrane segment at 539 to 559 (ALPGALLLLSTGVLFCPFDIF) threads the bilayer. Topologically, residues 560–686 (YRSTRYCFMR…VRFKYAATPT (127 aa)) are cytoplasmic. The region spanning 624 to 815 (TSGQQYKHLA…PLPFRELETD (192 aa)) is the EXS domain. Residues 687–707 (PFWVWMVIISSSGATIYQLYW) traverse the membrane as a helical segment. Topologically, residues 708–734 (DFVKDWGFLNPKSKNRWLRNELILKNK) are extracellular. The helical transmembrane segment at 735–751 (SIYYVSMMLNLALRLAW) threads the bilayer. Residues 752–815 (TESVMKIHIG…PLPFRELETD (64 aa)) lie on the Cytoplasmic side of the membrane.

It belongs to the SYG1 (TC 2.A.94) family. In terms of tissue distribution, specifically expressed in roots.

The protein localises to the cell membrane. Functionally, involved in the transfer of inorganic phosphate (Pi) from roots to shoots. This is Phosphate transporter PHO1-2 (PHO1-2) from Oryza sativa subsp. japonica (Rice).